A 264-amino-acid polypeptide reads, in one-letter code: 3-methyl-2-oxobutanoate hydroxymethyltransferase (264 aa).

Aspartate 45 and aspartate 84 together coordinate Mg(2+). 3-methyl-2-oxobutanoate-binding positions include 45–46 (DS), aspartate 84, and lysine 112. Position 114 (glutamate 114) interacts with Mg(2+). The active-site Proton acceptor is glutamate 181.

This sequence belongs to the PanB family. As to quaternary structure, homodecamer; pentamer of dimers. It depends on Mg(2+) as a cofactor.

It is found in the cytoplasm. It carries out the reaction 3-methyl-2-oxobutanoate + (6R)-5,10-methylene-5,6,7,8-tetrahydrofolate + H2O = 2-dehydropantoate + (6S)-5,6,7,8-tetrahydrofolate. The protein operates within cofactor biosynthesis; (R)-pantothenate biosynthesis; (R)-pantoate from 3-methyl-2-oxobutanoate: step 1/2. Catalyzes the reversible reaction in which hydroxymethyl group from 5,10-methylenetetrahydrofolate is transferred onto alpha-ketoisovalerate to form ketopantoate. The chain is 3-methyl-2-oxobutanoate hydroxymethyltransferase from Alteromonas mediterranea (strain DSM 17117 / CIP 110805 / LMG 28347 / Deep ecotype).